The following is a 589-amino-acid chain: Pyruvate kinase (589 aa).

Substrate is bound at residue Arg32. K(+) contacts are provided by Asn34, Ser36, Asp66, and Thr67. 34-37 provides a ligand contact to ATP; that stretch reads NFSH. ATP is bound by residues Arg73 and Lys157. Glu223 is a binding site for Mg(2+). Positions 246, 247, and 279 each coordinate substrate. Asp247 is a binding site for Mg(2+).

Belongs to the pyruvate kinase family. It in the C-terminal section; belongs to the PEP-utilizing enzyme family. Homotetramer. It depends on Mg(2+) as a cofactor. K(+) serves as cofactor.

The enzyme catalyses pyruvate + ATP = phosphoenolpyruvate + ADP + H(+). It functions in the pathway carbohydrate degradation; glycolysis; pyruvate from D-glyceraldehyde 3-phosphate: step 5/5. Strongly activated by glucose-6-phosphate, ribose-5-phosphate and fructose-6-phosphate. Weak activator AMP and weak inhibitor fructose-1,6-bisphosphate can act as strong inhibitors in the presence of strong activators. The chain is Pyruvate kinase (pyk) from Lactobacillus delbrueckii subsp. bulgaricus.